Consider the following 337-residue polypeptide: Dihydroorotate dehydrogenase (quinone) (337 aa).

Residues 62–66 and Thr86 contribute to the FMN site; that span reads AGLDK. Lys66 serves as a coordination point for substrate. 111–115 is a binding site for substrate; the sequence is NRFGF. Positions 139 and 172 each coordinate FMN. Substrate is bound at residue Asn172. Ser175 (nucleophile) is an active-site residue. A substrate-binding site is contributed by Asn177. FMN contacts are provided by Lys217 and Thr245. Substrate is bound at residue 246 to 247; the sequence is NT. Residues Gly268, Gly297, and 318–319 contribute to the FMN site; that span reads YS.

It belongs to the dihydroorotate dehydrogenase family. Type 2 subfamily. In terms of assembly, monomer. Requires FMN as cofactor.

Its subcellular location is the cell membrane. The enzyme catalyses (S)-dihydroorotate + a quinone = orotate + a quinol. Its pathway is pyrimidine metabolism; UMP biosynthesis via de novo pathway; orotate from (S)-dihydroorotate (quinone route): step 1/1. Functionally, catalyzes the conversion of dihydroorotate to orotate with quinone as electron acceptor. This chain is Dihydroorotate dehydrogenase (quinone), found in Methylobacillus flagellatus (strain ATCC 51484 / DSM 6875 / VKM B-1610 / KT).